The primary structure comprises 273 residues: Dermonecrotic toxin LdSicTox-alphaIB1bi (273 aa).

Residue His-5 is part of the active site. The Mg(2+) site is built by Glu-25 and Asp-27. The active-site Nucleophile is His-41. Cystine bridges form between Cys-45-Cys-51 and Cys-47-Cys-190. Residue Asp-85 participates in Mg(2+) binding. N-linked (GlcNAc...) asparagine glycosylation is present at Asn-250.

Belongs to the arthropod phospholipase D family. Class II subfamily. It depends on Mg(2+) as a cofactor. Expressed by the venom gland.

It is found in the secreted. The catalysed reaction is an N-(acyl)-sphingosylphosphocholine = an N-(acyl)-sphingosyl-1,3-cyclic phosphate + choline. It catalyses the reaction an N-(acyl)-sphingosylphosphoethanolamine = an N-(acyl)-sphingosyl-1,3-cyclic phosphate + ethanolamine. The enzyme catalyses a 1-acyl-sn-glycero-3-phosphocholine = a 1-acyl-sn-glycero-2,3-cyclic phosphate + choline. It carries out the reaction a 1-acyl-sn-glycero-3-phosphoethanolamine = a 1-acyl-sn-glycero-2,3-cyclic phosphate + ethanolamine. Its function is as follows. Dermonecrotic toxins cleave the phosphodiester linkage between the phosphate and headgroup of certain phospholipids (sphingolipid and lysolipid substrates), forming an alcohol (often choline) and a cyclic phosphate. This toxin acts on sphingomyelin (SM). It may also act on ceramide phosphoethanolamine (CPE), lysophosphatidylcholine (LPC) and lysophosphatidylethanolamine (LPE), but not on lysophosphatidylserine (LPS), and lysophosphatidylglycerol (LPG). It acts by transphosphatidylation, releasing exclusively cyclic phosphate products as second products. Induces dermonecrosis, hemolysis, increased vascular permeability, edema, inflammatory response, and platelet aggregation. This Loxosceles deserta (Desert recluse spider) protein is Dermonecrotic toxin LdSicTox-alphaIB1bi.